The primary structure comprises 295 residues: Small ribosomal subunit protein uS2 (295 aa).

Positions 260–295 (KQAKKFSKTKNIDEETNTEFEQALNDADENKNSDNA) are disordered.

The protein belongs to the universal ribosomal protein uS2 family.

This is Small ribosomal subunit protein uS2 from Rickettsia felis (strain ATCC VR-1525 / URRWXCal2) (Rickettsia azadi).